We begin with the raw amino-acid sequence, 60 residues long: U1-theraphotoxin-Agm3a (60 aa).

The signal sequence occupies residues 1–21 (MKFSVLVFILGLVLLLALSSA). Positions 22–29 (TEMEENAR) are excised as a propeptide. Intrachain disulfides connect cysteine 31–cysteine 45, cysteine 38–cysteine 50, and cysteine 44–cysteine 57.

The protein belongs to the neurotoxin 10 (Hwtx-1) family. 63 (VsTx1) subfamily. In terms of tissue distribution, expressed by the venom gland.

It is found in the secreted. Its function is as follows. Inhibits sodium channels Nav1.7/SCN9A and potassium channels Kv11.1/KCNH2. Also binds the voltage-sensor domain of the potassium channel KvAP (from the archaeon Aeropyrum pernix) with very slow apparent binding kinetics and affects channel gating. Reaches its target by dynamically partitioning into anionic or zwitterionic headgroup lipid membranes. May bind to the open state of KvAP. This is U1-theraphotoxin-Agm3a from Acanthoscurria gomesiana (Tarantula spider).